Consider the following 134-residue polypeptide: Profilin-3 (134 aa).

An intrachain disulfide couples C13 to C118. An Involved in PIP2 interaction motif is present at residues 84–100 (AVIRGKKGSGGITIKKT). T114 carries the post-translational modification Phosphothreonine.

It belongs to the profilin family. In terms of assembly, occurs in many kinds of cells as a complex with monomeric actin in a 1:1 ratio. Phosphorylated by MAP kinases.

The protein localises to the cytoplasm. Its subcellular location is the cytoskeleton. Binds to actin and affects the structure of the cytoskeleton. At high concentrations, profilin prevents the polymerization of actin, whereas it enhances it at low concentrations. In Olea europaea (Common olive), this protein is Profilin-3.